The chain runs to 769 residues: Discoidin, CUB and LCCL domain-containing protein 2 (769 aa).

The span at 1-29 shows a compositional bias: low complexity; sequence MASRAPLRAARSPQDPGGRAAPAATGRAP. The interval 1–39 is disordered; the sequence is MASRAPLRAARSPQDPGGRAAPAATGRAPLPSAGWCPLP. A signal peptide spans 1–63; sequence MASRAPLRAA…LLLLLPDAGA (63 aa). Residues 64-523 lie on the Extracellular side of the membrane; that stretch reads QKGDGCGHTV…VTPSVTKDVA (460 aa). 2 disulfides stabilise this stretch: cysteine 69–cysteine 96 and cysteine 123–cysteine 145. Positions 69-184 constitute a CUB domain; that stretch reads CGHTVLGPES…RGFLASYSVI (116 aa). Asparagine 92 carries N-linked (GlcNAc...) asparagine glycosylation. An N-linked (GlcNAc...) asparagine glycan is attached at asparagine 152. An LCCL domain is found at 184–282; sequence IDKQDLITCL…MVGYLSTSLF (99 aa). Cysteine 212 and cysteine 234 are oxidised to a cystine. Asparagine 269 carries an N-linked (GlcNAc...) asparagine glycan. Residues cysteine 289 and cysteine 446 are joined by a disulfide bond. The F5/8 type C domain occupies 289-446; the sequence is CYGTLGMESG…IAMKVELLGC (158 aa). Positions 455-476 are disordered; sequence PKLTQPPPPRNSNNLKNTTVHP. Polar residues predominate over residues 465 to 474; the sequence is NSNNLKNTTV. Residues asparagine 471 and asparagine 511 are each glycosylated (N-linked (GlcNAc...) asparagine). The helical transmembrane segment at 524–544 threads the bilayer; that stretch reads LAAVLVPVLVMALTTLILILV. The Cytoplasmic portion of the chain corresponds to 545–769; the sequence is CAWHWRNRKK…EKFDAFKETL (225 aa). Serine 601 is modified (phosphoserine). The tract at residues 719 to 769 is disordered; it reads SCSSGQAQYDTPKGGKPAAAPEELVYQVPQSTQEASGAGRDEKFDAFKETL. Over residues 757–769 the composition is skewed to basic and acidic residues; sequence GRDEKFDAFKETL.

The protein localises to the membrane. This is Discoidin, CUB and LCCL domain-containing protein 2 (Dcbld2) from Rattus norvegicus (Rat).